The chain runs to 1394 residues: Adhesion and penetration protein autotransporter (1394 aa).

Positions 1 to 25 (MKKTVFRLNFLTACISLGIVSQAWA) are cleaved as a signal peptide. The region spanning 26-286 (GHTYFGIDYQ…QLVRKSYFDE (261 aa)) is the Peptidase S6 domain. Ser243 is an active-site residue. Disordered regions lie at residues 848–870 (AYSA…TPTS) and 995–1027 (TLEA…FPDT). An Autotransporter domain is found at 1140–1394 (VDQAQSAVWT…NVGVKLGYRW (255 aa)).

The protein localises to the periplasm. It is found in the secreted. Its subcellular location is the cell surface. It localises to the cell outer membrane. Its function is as follows. Probable protease; promotes adherence and invasion by directly binding to a host cell structure. This chain is Adhesion and penetration protein autotransporter (hap), found in Haemophilus influenzae.